Reading from the N-terminus, the 178-residue chain is Acireductone dioxygenase (178 aa).

Residues histidine 81, histidine 83, glutamate 87, and histidine 126 each contribute to the Fe(2+) site. Positions 81, 83, 87, and 126 each coordinate Ni(2+).

It belongs to the acireductone dioxygenase (ARD) family. Fe(2+) serves as cofactor. Requires Ni(2+) as cofactor.

It is found in the cytoplasm. The protein localises to the nucleus. It carries out the reaction 1,2-dihydroxy-5-(methylsulfanyl)pent-1-en-3-one + O2 = 4-methylsulfanyl-2-oxobutanoate + formate + 2 H(+). The enzyme catalyses 1,2-dihydroxy-5-(methylsulfanyl)pent-1-en-3-one + O2 = 3-(methylsulfanyl)propanoate + CO + formate + 2 H(+). It functions in the pathway amino-acid biosynthesis; L-methionine biosynthesis via salvage pathway; L-methionine from S-methyl-5-thio-alpha-D-ribose 1-phosphate: step 5/6. In terms of biological role, catalyzes 2 different reactions between oxygen and the acireductone 1,2-dihydroxy-3-keto-5-methylthiopentene (DHK-MTPene) depending upon the metal bound in the active site. Fe-containing acireductone dioxygenase (Fe-ARD) produces formate and 2-keto-4-methylthiobutyrate (KMTB), the alpha-ketoacid precursor of methionine in the methionine recycle pathway. Ni-containing acireductone dioxygenase (Ni-ARD) produces methylthiopropionate, carbon monoxide and formate, and does not lie on the methionine recycle pathway. This chain is Acireductone dioxygenase (adi1), found in Neurospora crassa (strain ATCC 24698 / 74-OR23-1A / CBS 708.71 / DSM 1257 / FGSC 987).